The following is a 370-amino-acid chain: Phospho-N-acetylmuramoyl-pentapeptide-transferase (370 aa).

10 helical membrane-spanning segments follow: residues 24–44, 78–98, 103–123, 138–158, 177–197, 209–229, 245–265, 273–293, 298–318, and 347–367; these read YLTF…VAMG, TMGG…WADL, VWVV…DDYA, KLVA…LFAP, ALVI…IAGF, GLAI…AYLV, GVGE…GFLW, IFMG…IAVC, LVLG…MIQV, and TVVI…LATL.

Belongs to the glycosyltransferase 4 family. MraY subfamily. The cofactor is Mg(2+).

The protein resides in the cell inner membrane. The enzyme catalyses UDP-N-acetyl-alpha-D-muramoyl-L-alanyl-gamma-D-glutamyl-meso-2,6-diaminopimeloyl-D-alanyl-D-alanine + di-trans,octa-cis-undecaprenyl phosphate = di-trans,octa-cis-undecaprenyl diphospho-N-acetyl-alpha-D-muramoyl-L-alanyl-D-glutamyl-meso-2,6-diaminopimeloyl-D-alanyl-D-alanine + UMP. It participates in cell wall biogenesis; peptidoglycan biosynthesis. Functionally, catalyzes the initial step of the lipid cycle reactions in the biosynthesis of the cell wall peptidoglycan: transfers peptidoglycan precursor phospho-MurNAc-pentapeptide from UDP-MurNAc-pentapeptide onto the lipid carrier undecaprenyl phosphate, yielding undecaprenyl-pyrophosphoryl-MurNAc-pentapeptide, known as lipid I. The protein is Phospho-N-acetylmuramoyl-pentapeptide-transferase of Caulobacter vibrioides (strain NA1000 / CB15N) (Caulobacter crescentus).